The following is a 262-amino-acid chain: 4-hydroxy-2-oxovalerate aldolase (262 aa).

The active-site Proton acceptor is the His-48. Residue Gln-149 participates in substrate binding. A Mg(2+)-binding site is contributed by Glu-151. Substrate is bound by residues Ala-176 and Asp-177. Asp-177 serves as a coordination point for Mg(2+).

Belongs to the HpcH/HpaI aldolase family.

The catalysed reaction is (S)-4-hydroxy-2-oxopentanoate = acetaldehyde + pyruvate. Its pathway is xenobiotic degradation; biphenyl degradation. Catalyzes the reversible retro-aldol cleavage of 4-hydroxy-2-oxovalerate to pyruvate and acetaldehyde. The sequence is that of 4-hydroxy-2-oxovalerate aldolase (bphF) from Novosphingobium aromaticivorans (Sphingomonas aromaticivorans).